A 312-amino-acid chain; its full sequence is Glutaminase (312 aa).

Residues S67, N118, E162, N169, Y193, Y245, and V263 each coordinate substrate.

It belongs to the glutaminase family. As to quaternary structure, homotetramer.

The enzyme catalyses L-glutamine + H2O = L-glutamate + NH4(+). This Bordetella avium (strain 197N) protein is Glutaminase.